A 255-amino-acid chain; its full sequence is Spectinomycin 9-adenylyltransferase (255 aa).

It carries out the reaction spectinomycin + ATP = 9-O-adenylylspectinomycin + diphosphate. Functionally, mediates bacterial resistance to the antibiotic spectinomycin but not streptomycin. The protein is Spectinomycin 9-adenylyltransferase of Enterococcus faecalis (Streptococcus faecalis).